The primary structure comprises 89 residues: Neurotoxin beta-KTx 52.1 (89 aa).

The N-terminal stretch at 1–20 is a signal peptide; sequence MKQYIFFLALIVLTATFAEA. A propeptide spanning residues 21 to 39 is cleaved from the precursor; that stretch reads GKKTEILDKVKKVFSKAKD. A BetaSPN-type CS-alpha/beta domain is found at 53 to 89; it reads ELGCPFIDKWCEDHCDSKKLVGKCENFDCSCVKLGGK. Disulfide bonds link Cys-56–Cys-76, Cys-63–Cys-81, and Cys-67–Cys-83.

Belongs to the long chain scorpion toxin family. Class 2 subfamily. In terms of tissue distribution, expressed by the venom gland.

It localises to the secreted. Its function is as follows. Inhibits voltage-gated potassium channel. The chain is Neurotoxin beta-KTx 52.1 from Lychas mucronatus (Chinese swimming scorpion).